Reading from the N-terminus, the 119-residue chain is Iron-sulfur cluster insertion protein ErpA (119 aa).

Iron-sulfur cluster contacts are provided by Cys-47, Cys-111, and Cys-113.

It belongs to the HesB/IscA family. As to quaternary structure, homodimer. The cofactor is iron-sulfur cluster.

In terms of biological role, required for insertion of 4Fe-4S clusters for at least IspG. This is Iron-sulfur cluster insertion protein ErpA from Blochmanniella floridana.